Reading from the N-terminus, the 39-residue chain is Photosystem II reaction center protein L (39 aa).

Residues 18–38 form a helical membrane-spanning segment; that stretch reads SLYLGLLLTFVMGILFSSYFF.

It belongs to the PsbL family. PSII is composed of 1 copy each of membrane proteins PsbA, PsbB, PsbC, PsbD, PsbE, PsbF, PsbH, PsbI, PsbJ, PsbK, PsbL, PsbM, PsbT, PsbX, PsbY, Psb30/Ycf12, peripheral proteins PsbO, CyanoQ (PsbQ), PsbU, PsbV and a large number of cofactors. It forms dimeric complexes.

Its subcellular location is the cellular thylakoid membrane. Its function is as follows. One of the components of the core complex of photosystem II (PSII). PSII is a light-driven water:plastoquinone oxidoreductase that uses light energy to abstract electrons from H(2)O, generating O(2) and a proton gradient subsequently used for ATP formation. It consists of a core antenna complex that captures photons, and an electron transfer chain that converts photonic excitation into a charge separation. This subunit is found at the monomer-monomer interface and is required for correct PSII assembly and/or dimerization. This chain is Photosystem II reaction center protein L, found in Prochlorococcus marinus (strain MIT 9211).